The primary structure comprises 59 residues: UPF0434 protein LHK_01103 (59 aa).

Belongs to the UPF0434 family.

In Laribacter hongkongensis (strain HLHK9), this protein is UPF0434 protein LHK_01103.